The following is a 343-amino-acid chain: Protein RecA (343 aa).

66–73 contributes to the ATP binding site; the sequence is GPESSGKT.

Belongs to the RecA family.

The protein localises to the cytoplasm. Functionally, can catalyze the hydrolysis of ATP in the presence of single-stranded DNA, the ATP-dependent uptake of single-stranded DNA by duplex DNA, and the ATP-dependent hybridization of homologous single-stranded DNAs. It interacts with LexA causing its activation and leading to its autocatalytic cleavage. The polypeptide is Protein RecA (Rickettsia canadensis (strain McKiel)).